We begin with the raw amino-acid sequence, 140 residues long: MSRKWLNKVKWDDHGLVPVIVQEQGSNDVLMFAFMNREALQKTVETGEAVFWSRSRKRLWHKGEESGHIQQVHEIRLDCDEDVVLLRVTQVGGIACHTGRHACFFQKFEGTAEDGDWHTVEPVLKNPDDIYAGKPGHNHE.

Mg(2+) is bound at residue Asp78. A Zn(2+)-binding site is contributed by Cys79. The Mg(2+) site is built by Asp80 and Asp82. Zn(2+) contacts are provided by Cys96 and Cys103.

Belongs to the PRA-CH family. As to quaternary structure, homodimer. Mg(2+) is required as a cofactor. Zn(2+) serves as cofactor.

The protein resides in the cytoplasm. It catalyses the reaction 1-(5-phospho-beta-D-ribosyl)-5'-AMP + H2O = 1-(5-phospho-beta-D-ribosyl)-5-[(5-phospho-beta-D-ribosylamino)methylideneamino]imidazole-4-carboxamide. The protein operates within amino-acid biosynthesis; L-histidine biosynthesis; L-histidine from 5-phospho-alpha-D-ribose 1-diphosphate: step 3/9. Its function is as follows. Catalyzes the hydrolysis of the adenine ring of phosphoribosyl-AMP. The protein is Phosphoribosyl-AMP cyclohydrolase of Ralstonia nicotianae (strain ATCC BAA-1114 / GMI1000) (Ralstonia solanacearum).